A 1546-amino-acid polypeptide reads, in one-letter code: Mediator of RNA polymerase II transcription subunit 14 (1546 aa).

2 consecutive short sequence motifs (LXXLL motif) follow at residues 51-55 and 468-472; these read LAELL and LPSLL. Disordered stretches follow at residues 692-717, 1000-1193, and 1512-1546; these read KSATAAGQQPQQGAASAAGTAPPSGS, GRAP…NRPW, and NPMMPMQQLQPQVGPQGQVGPGGYPQLGPNPGGPQ. 3 stretches are compositionally biased toward low complexity: residues 693 to 717, 1020 to 1035, and 1061 to 1075; these read SATAAGQQPQQGAASAAGTAPPSGS, GGPSSVTGVSAGGSSP, and PSSSNPHTPASPHPS. Pro residues predominate over residues 1093 to 1102; sequence PPAPHMPHPS. Polar residues predominate over residues 1125–1149; the sequence is GPNTLYMQSHQDSPFTAMSPANNQW. Positions 1153-1163 are enriched in pro residues; that stretch reads PSMPRPSPRPG. The segment covering 1515–1527 has biased composition (low complexity); the sequence is MPMQQLQPQVGPQ.

This sequence belongs to the Mediator complex subunit 14 family. In terms of assembly, component of the Mediator complex.

It is found in the nucleus. Its function is as follows. Component of the Mediator complex, a coactivator involved in the regulated transcription of nearly all RNA polymerase II-dependent genes. Mediator functions as a bridge to convey information from gene-specific regulatory proteins to the basal RNA polymerase II transcription machinery. Mediator is recruited to promoters by direct interactions with regulatory proteins and serves as a scaffold for the assembly of a functional preinitiation complex with RNA polymerase II and the general transcription factors. This is Mediator of RNA polymerase II transcription subunit 14 (MED14) from Drosophila pseudoobscura pseudoobscura (Fruit fly).